The primary structure comprises 422 residues: uncharacterized protein (422 aa).

12 consecutive transmembrane segments (helical) span residues 23–43 (IVKI…LIYD), 47–67 (AIGT…LAPV), 90–110 (AIVL…WFVM), 112–132 (LMIV…ALIP), 151–171 (AQIV…FISP), 172–192 (SYTM…VLFI), 228–248 (ILYP…PWEA), 263–283 (IVYS…GFVL), 291–308 (YGLL…AFFI), 318–340 (VFFA…YTII), 352–372 (VYAV…VICG), and 381–401 (GKVI…ILLF).

Belongs to the major facilitator superfamily.

The protein resides in the cell membrane. This is an uncharacterized protein from Bacillus subtilis (strain 168).